We begin with the raw amino-acid sequence, 433 residues long: Citrate synthase, mitochondrial (433 aa).

Active-site residues include histidine 274 and histidine 320. Arginine 329 provides a ligand contact to oxaloacetate. Residue aspartate 375 is part of the active site. Residues arginine 401 and arginine 421 each coordinate oxaloacetate.

This sequence belongs to the citrate synthase family. In terms of assembly, homodimer.

It localises to the mitochondrion matrix. It catalyses the reaction oxaloacetate + acetyl-CoA + H2O = citrate + CoA + H(+). The protein operates within carbohydrate metabolism; tricarboxylic acid cycle; isocitrate from oxaloacetate: step 1/2. Key enzyme of the Krebs tricarboxylic acid cycle which catalyzes the synthesis of citrate from acetyl coenzyme A and oxaloacetate. The chain is Citrate synthase, mitochondrial (CS) from Gallus gallus (Chicken).